Reading from the N-terminus, the 34-residue chain is Protein MgtT (34 aa).

The tract at residues 1-34 (MNGDNPSPNRPLVTVVYKGPDFYDGEKKPPVNRR) is disordered. Basic and acidic residues predominate over residues 24 to 34 (DGEKKPPVNRR).

This is Protein MgtT from Escherichia coli (strain K12).